Reading from the N-terminus, the 554-residue chain is Glutamine--tRNA ligase (554 aa).

Positions 34–44 (PEPNGYLHIGH) match the 'HIGH' region motif. ATP is bound by residues 35–37 (EPN) and 41–47 (HIGHAKS). The L-glutamine site is built by Asp67 and Tyr212. ATP-binding positions include Thr231, 261 to 262 (RL), and 269 to 271 (MSK). The 'KMSKS' region motif lies at 268 to 272 (VMSKR). An interaction with tRNA region spans residues 317–324 (TKQDNTIE).

It belongs to the class-I aminoacyl-tRNA synthetase family. In terms of assembly, monomer.

The protein resides in the cytoplasm. The enzyme catalyses tRNA(Gln) + L-glutamine + ATP = L-glutaminyl-tRNA(Gln) + AMP + diphosphate. The protein is Glutamine--tRNA ligase of Escherichia coli (strain 55989 / EAEC).